We begin with the raw amino-acid sequence, 380 residues long: Tubby-like F-box protein 9 (380 aa).

The F-box domain occupies proline 30–threonine 76. The tract at residues serine 258–glycine 283 is disordered. A compositionally biased stretch (polar residues) spans leucine 272–glycine 283.

Belongs to the TUB family. In terms of assembly, part of a SCF (SKP1-cullin-F-box) protein ligase complex. Interacts with SKP1A/ASK1 and XERICO. Ubiquitous.

Its pathway is protein modification; protein ubiquitination. Functionally, component of SCF(ASK-cullin-F-box) E3 ubiquitin ligase complexes, which may mediate the ubiquitination and subsequent proteasomal degradation of target proteins. Confers sensitivity to ABA during seed germination and early seedling development. The chain is Tubby-like F-box protein 9 from Arabidopsis thaliana (Mouse-ear cress).